The chain runs to 71 residues: Arrestin-D (71 aa).

This sequence belongs to the arrestin family. In terms of tissue distribution, adrenal, cerebral cortex, heart, liver, lung, pituitary and testis.

This chain is Arrestin-D (Dar), found in Rattus norvegicus (Rat).